Consider the following 250-residue polypeptide: Putative B3 domain-containing protein At4g03170 (250 aa).

Over residues 1-12 the composition is skewed to polar residues; sequence MANSTGKPTSST. Residues 1-90 are disordered; that stretch reads MANSTGKPTS…EKNQPKRFKK (90 aa). The segment covering 34-56 has biased composition (acidic residues); it reads DREEDIDDEDDIDDEVIDDEDYE. A compositionally biased stretch (basic and acidic residues) spans 72 to 84; the sequence is QSREREEETEKNQ. The segment at residues 137–245 is a DNA-binding region (TF-B3); it reads KKQLMSSDVD…KLCFAIHYVK (109 aa).

It is found in the nucleus. This is Putative B3 domain-containing protein At4g03170 from Arabidopsis thaliana (Mouse-ear cress).